Consider the following 313-residue polypeptide: Testis-expressed protein 264 (313 aa).

Over 1-6 (MSDLLL) the chain is Lumenal. Residues 7 to 31 (LGLIGGLTLLLLLTLLAFAGYSGLL) traverse the membrane as a helical; Signal-anchor for type III membrane protein segment. Residues 32-313 (AGVEVSAGSP…EPTAPEKGKE (282 aa)) lie on the Cytoplasmic side of the membrane. Residues 193 to 313 (PEMKETEWKW…EPTAPEKGKE (121 aa)) form a disordered region. Residues 219–247 (DTMSDTSSVSLEVSPGSRETSAATLSPGA) show a composition bias toward polar residues. Phosphoserine occurs at positions 239 and 244. Residues 251 to 263 (GWDDGDTRSEHSY) show a composition bias toward basic and acidic residues. Residues 264 to 273 (SESGASGSSF) show a composition bias toward low complexity. Positions 273-276 (FEEL) match the LIR motif motif.

In terms of assembly, interacts (via the LIR motif) with ATG8 family proteins MAP1LC3A, MAP1LC3B, GABARAP and GABARAPL1. Interacts with VCP/p97; bridging VCP/p97 to covalent DNA-protein cross-links (DPCs). Interacts with TOP1 (when sumoylated).

The protein localises to the endoplasmic reticulum membrane. It is found in the cytoplasmic vesicle. Its subcellular location is the autophagosome. It localises to the cytoplasm. The protein resides in the cytosol. The protein localises to the nucleus. It is found in the chromosome. Functionally, major reticulophagy (also called ER-phagy) receptor that acts independently of other candidate reticulophagy receptors to remodel subdomains of the endoplasmic reticulum into autophagosomes upon nutrient stress, which then fuse with lysosomes for endoplasmic reticulum turnover. The ATG8-containing isolation membrane (IM) cradles a tubular segment of TEX264-positive ER near a three-way junction, allowing the formation of a synapse of 2 juxtaposed membranes with trans interaction between the TEX264 and ATG8 proteins. Expansion of the IM would extend the capture of ER, possibly through a 'zipper-like' process involving continued trans TEX264-ATG8 interactions, until poorly understood mechanisms lead to the fission of relevant membranes and, ultimately, autophagosomal membrane closure. Also involved in the repair of covalent DNA-protein cross-links (DPCs) during DNA synthesis: acts by bridging VCP/p97 to covalent DNA-protein cross-links (DPCs) and initiating resolution of DPCs by SPRTN. This is Testis-expressed protein 264 from Homo sapiens (Human).